Reading from the N-terminus, the 273-residue chain is MHSRTVFFVSDGTGITAETFGNAILAQFEMKPRHVRLPFVDTVDKAHQAVRQINHCGEVEGKKPIVFTTLVNMEVLKTLQDGCQGMLLDMFGTFVHPLEQELGIKSHHRVGRFSDASHSKEYSDRIAAINFSLAHDDGQSHHDLAGADVILVGVSRSGKTPTSLYLAMQCGLKTANYPLIPEDFERRQLPPALEPHRKKIFGLTIQAERLAEIRNERRPNSRYASLDNCRAEIAGAEAMMRRSSIRWLSTTTKSIEEIATTILQELRPERLVY.

Position 153–160 (153–160) interacts with ADP; it reads GVSRSGKT.

It belongs to the pyruvate, phosphate/water dikinase regulatory protein family. PSRP subfamily.

It carries out the reaction [pyruvate, water dikinase] + ADP = [pyruvate, water dikinase]-phosphate + AMP + H(+). The catalysed reaction is [pyruvate, water dikinase]-phosphate + phosphate + H(+) = [pyruvate, water dikinase] + diphosphate. In terms of biological role, bifunctional serine/threonine kinase and phosphorylase involved in the regulation of the phosphoenolpyruvate synthase (PEPS) by catalyzing its phosphorylation/dephosphorylation. This chain is Putative phosphoenolpyruvate synthase regulatory protein, found in Verminephrobacter eiseniae (strain EF01-2).